Consider the following 62-residue polypeptide: Toxin Tb2 (62 aa).

An LCN-type CS-alpha/beta domain is found at 1 to 62 (KEGYAMDHEG…KVWDYATNKC (62 aa)). 4 disulfide bridges follow: Cys11–Cys62, Cys15–Cys38, Cys23–Cys43, and Cys27–Cys45. Cys62 bears the Cysteine amide mark.

Belongs to the long (4 C-C) scorpion toxin superfamily. Sodium channel inhibitor family. Beta subfamily. In terms of tissue distribution, expressed by the venom gland.

The protein localises to the secreted. Its function is as follows. Beta toxins bind voltage-independently at site-4 of sodium channels (Nav) and shift the voltage of activation toward more negative potentials thereby affecting sodium channel activation and promoting spontaneous and repetitive firing. This toxin is active on mammals. The sequence is that of Toxin Tb2 from Tityus bahiensis (Brazilian scorpion).